The chain runs to 96 residues: MKFRPLGDRVLVKRVEEETKTKGGIIIPDTAKEKPQEGEVVAVGPGARNDKGDVVALDVKAGDRILFGKWSGTEVKVDGQDLLIMKESDVLGVVEA.

The protein belongs to the GroES chaperonin family. As to quaternary structure, heptamer of 7 subunits arranged in a ring. Interacts with the chaperonin GroEL.

It localises to the cytoplasm. In terms of biological role, together with the chaperonin GroEL, plays an essential role in assisting protein folding. The GroEL-GroES system forms a nano-cage that allows encapsulation of the non-native substrate proteins and provides a physical environment optimized to promote and accelerate protein folding. GroES binds to the apical surface of the GroEL ring, thereby capping the opening of the GroEL channel. The sequence is that of Co-chaperonin GroES from Caulobacter vibrioides (strain ATCC 19089 / CIP 103742 / CB 15) (Caulobacter crescentus).